We begin with the raw amino-acid sequence, 37 residues long: Large ribosomal subunit protein bL36A (37 aa).

It belongs to the bacterial ribosomal protein bL36 family.

The protein is Large ribosomal subunit protein bL36A of Kocuria rhizophila (strain ATCC 9341 / DSM 348 / NBRC 103217 / DC2201).